Here is a 370-residue protein sequence, read N- to C-terminus: MTVDAVRVELGARAYEVRIGPGLIARAGAEIAPLLRRPKVAILTDETVAGLHLDPFRQALAEAGIASSALALPAGEATKGWPQFARAVEWLLEEKVERRDVVVALGGGVIGDLAGFAAAVLRRGVRFVQVPTTLLAQVDSSVGGKTGINTAQGKNLVGAFHQPSLVLADIGVLETLPPRDFRAGYGEVVKYGLLGDADFYEWLEEAGPRLAADTEARQRAVRRSVEMKAEIVARDETEEGDRALLNLGHTFCHALEKATGYSDRLLHGEGVAIGCALAFELSQRLGLCAQEAPSRLRAHLRAMGMKVDLRDIPGDLPSAEALLALMAQDKKVVDGKLRFILARGIGQAFVADDVPGDVVRTLLEDALAQR.

NAD(+) is bound by residues 108–112 (GVIGD), 132–133 (TT), Lys-145, and Lys-154. 3 residues coordinate Zn(2+): Glu-187, His-249, and His-267.

Belongs to the sugar phosphate cyclases superfamily. Dehydroquinate synthase family. Co(2+) serves as cofactor. The cofactor is Zn(2+). Requires NAD(+) as cofactor.

It localises to the cytoplasm. It catalyses the reaction 7-phospho-2-dehydro-3-deoxy-D-arabino-heptonate = 3-dehydroquinate + phosphate. Its pathway is metabolic intermediate biosynthesis; chorismate biosynthesis; chorismate from D-erythrose 4-phosphate and phosphoenolpyruvate: step 2/7. Catalyzes the conversion of 3-deoxy-D-arabino-heptulosonate 7-phosphate (DAHP) to dehydroquinate (DHQ). The sequence is that of 3-dehydroquinate synthase from Cereibacter sphaeroides (strain ATCC 17029 / ATH 2.4.9) (Rhodobacter sphaeroides).